The sequence spans 281 residues: DegV domain-containing protein (281 aa).

The 278-residue stretch at 3–280 (WKIVSDSGCD…EGGLLMGYEI (278 aa)) folds into the DegV domain. Hexadecanoate contacts are provided by S63 and S91.

May bind long-chain fatty acids, such as palmitate, and may play a role in lipid transport or fatty acid metabolism. The protein is DegV domain-containing protein of Streptococcus gordonii.